Here is a 483-residue protein sequence, read N- to C-terminus: ATP-dependent protease ATPase subunit HslU (483 aa).

Residues V18 and 60-65 (GVGKTE) contribute to the ATP site. Low complexity-rich tracts occupy residues 136-147 (LPGGAPQPAPAQ) and 171-181 (AQADASQASPP). Positions 136-212 (LPGGAPQPAP…HGGKLDDREV (77 aa)) are disordered. The span at 182 to 191 (TGTGSAPDSR) shows a compositional bias: polar residues. Positions 192–209 (SSTREKLRTLWHGGKLDD) are enriched in basic and acidic residues. ATP contacts are provided by D296, E361, and R433.

The protein belongs to the ClpX chaperone family. HslU subfamily. In terms of assembly, a double ring-shaped homohexamer of HslV is capped on each side by a ring-shaped HslU homohexamer. The assembly of the HslU/HslV complex is dependent on binding of ATP.

It localises to the cytoplasm. In terms of biological role, ATPase subunit of a proteasome-like degradation complex; this subunit has chaperone activity. The binding of ATP and its subsequent hydrolysis by HslU are essential for unfolding of protein substrates subsequently hydrolyzed by HslV. HslU recognizes the N-terminal part of its protein substrates and unfolds these before they are guided to HslV for hydrolysis. In Nitratidesulfovibrio vulgaris (strain DSM 19637 / Miyazaki F) (Desulfovibrio vulgaris), this protein is ATP-dependent protease ATPase subunit HslU.